Reading from the N-terminus, the 416-residue chain is Putative pseudouridine transporter (416 aa).

At 1–2 the chain is on the periplasmic side; sequence MD. Residues 3–23 form a helical membrane-spanning segment; that stretch reads IMRSVVGMVVLLAIAFLLSVN. At 24–31 the chain is on the cytoplasmic side; that stretch reads KKSISLRT. Residues 32–52 form a helical membrane-spanning segment; the sequence is VGAALLLQIAIGGIMLYFPPG. Topologically, residues 53 to 104 are periplasmic; it reads KWAVEQAALGVHKVMSYSDAGSAFIFGSLVGPKMDVLFDGAGFIFAFRVLPA. Residues 105–125 form a helical membrane-spanning segment; that stretch reads IIFVTALISLLYYIGVMGLLI. The Cytoplasmic segment spans residues 126–172; it reads RILGSIFQKALNISKIESFVAVTTIFLGQNEIPAIVKPFIDRMNRNE. The chain crosses the membrane as a helical span at residues 173-193; that stretch reads LFTAICSGMASIAGSMMIGYA. The Periplasmic segment spans residues 194 to 196; it reads GMG. The helical transmembrane segment at 197–217 threads the bilayer; that stretch reads VPIDYLLAASLMAIPGGILFA. Residues 218 to 268 lie on the Cytoplasmic side of the membrane; the sequence is RILSPATEPSQVTFENLSFSETPPKSFIEAAASGAMTGLKIAAGVATVVMA. Residues 269-289 traverse the membrane as a helical segment; sequence FVAIIALINGIIGGIGGWFGF. The Periplasmic segment spans residues 290 to 352; sequence ANASLESIFG…QTGGTLEVKT (63 aa). The chain crosses the membrane as a helical span at residues 353 to 373; that stretch reads IAIISFALCGFANFGSIGVVV. The Cytoplasmic portion of the chain corresponds to 374 to 394; sequence GAFSAISPKRAPEIAQLGLRA. Residues 395-415 traverse the membrane as a helical segment; that stretch reads LAAATLSNLMSATIAGFFIGL. Alanine 416 is a topological domain (periplasmic).

Belongs to the concentrative nucleoside transporter (CNT) (TC 2.A.41) family.

It is found in the cell inner membrane. Functionally, could be involved in pseudouridine transport. This chain is Putative pseudouridine transporter (psuT), found in Escherichia coli (strain K12).